Here is a 510-residue protein sequence, read N- to C-terminus: ATP synthase subunit alpha (510 aa).

Residue 169–176 (GDRQTGKT) coordinates ATP.

It belongs to the ATPase alpha/beta chains family. In terms of assembly, F-type ATPases have 2 components, CF(1) - the catalytic core - and CF(0) - the membrane proton channel. CF(1) has five subunits: alpha(3), beta(3), gamma(1), delta(1), epsilon(1). CF(0) has four main subunits: a(1), b(1), b'(1) and c(9-12).

The protein resides in the cell inner membrane. The enzyme catalyses ATP + H2O + 4 H(+)(in) = ADP + phosphate + 5 H(+)(out). Functionally, produces ATP from ADP in the presence of a proton gradient across the membrane. The alpha chain is a regulatory subunit. This Rhodopseudomonas palustris (strain BisA53) protein is ATP synthase subunit alpha.